A 323-amino-acid polypeptide reads, in one-letter code: tRNA N6-adenosine threonylcarbamoyltransferase (323 aa).

Fe cation contacts are provided by His-105, His-109, and Tyr-126. Substrate-binding positions include 126 to 130 (YVSGG), Asp-158, Gly-171, Glu-175, and Asn-255. Asp-283 lines the Fe cation pocket.

Belongs to the KAE1 / TsaD family. Monomer. Component of the KEOPS complex that consists of Kae1, Bud32, Cgi121 and Pcc1; the whole complex dimerizes. Fe(2+) is required as a cofactor.

It is found in the cytoplasm. The catalysed reaction is L-threonylcarbamoyladenylate + adenosine(37) in tRNA = N(6)-L-threonylcarbamoyladenosine(37) in tRNA + AMP + H(+). Its function is as follows. Required for the formation of a threonylcarbamoyl group on adenosine at position 37 (t(6)A37) in tRNAs that read codons beginning with adenine. Is a component of the KEOPS complex that is probably involved in the transfer of the threonylcarbamoyl moiety of threonylcarbamoyl-AMP (TC-AMP) to the N6 group of A37. Kae1 likely plays a direct catalytic role in this reaction, but requires other protein(s) of the complex to fulfill this activity. The sequence is that of tRNA N6-adenosine threonylcarbamoyltransferase from Archaeoglobus fulgidus (strain ATCC 49558 / DSM 4304 / JCM 9628 / NBRC 100126 / VC-16).